A 334-amino-acid polypeptide reads, in one-letter code: Protein-glutamate methylesterase FrzG (334 aa).

Positions 147 to 334 (PYPLVAIAAS…AALMQWVDVC (188 aa)) constitute a CheB-type methylesterase domain. Catalysis depends on residues S156, H183, and D276.

It carries out the reaction [protein]-L-glutamate 5-O-methyl ester + H2O = L-glutamyl-[protein] + methanol + H(+). Functionally, probable methylesterase. Required for the normal aggregation of M.xanthus cells during fruiting body formation. It is also a component of a sensory transduction pathway that controls the frequency at which cells reverse their gliding direction. It may remove the methyl group from the gamma-glutamyl methyl ester residues in FrzCD. The chain is Protein-glutamate methylesterase FrzG (frzG) from Myxococcus xanthus.